The primary structure comprises 287 residues: Acetyl-coenzyme A carboxylase carboxyl transferase subunit beta (287 aa).

The CoA carboxyltransferase N-terminal domain maps to 25 to 287; sequence VWTKCSACEQ…KMLNTHVIEE (263 aa). Positions 29, 32, 48, and 51 each coordinate Zn(2+). A C4-type zinc finger spans residues 29–51; it reads CSACEQVLYRAELERNLEVCPKC.

This sequence belongs to the AccD/PCCB family. In terms of assembly, acetyl-CoA carboxylase is a heterohexamer composed of biotin carboxyl carrier protein (AccB), biotin carboxylase (AccC) and two subunits each of ACCase subunit alpha (AccA) and ACCase subunit beta (AccD). The cofactor is Zn(2+).

It is found in the cytoplasm. It catalyses the reaction N(6)-carboxybiotinyl-L-lysyl-[protein] + acetyl-CoA = N(6)-biotinyl-L-lysyl-[protein] + malonyl-CoA. It participates in lipid metabolism; malonyl-CoA biosynthesis; malonyl-CoA from acetyl-CoA: step 1/1. Functionally, component of the acetyl coenzyme A carboxylase (ACC) complex. Biotin carboxylase (BC) catalyzes the carboxylation of biotin on its carrier protein (BCCP) and then the CO(2) group is transferred by the transcarboxylase to acetyl-CoA to form malonyl-CoA. The chain is Acetyl-coenzyme A carboxylase carboxyl transferase subunit beta from Aeromonas salmonicida (strain A449).